The primary structure comprises 1281 residues: Angiotensin-converting enzyme (1281 aa).

Residues 1–17 (MPAALGLLLPWLSLVGA) form the signal peptide. The Extracellular segment spans residues 18-1241 (LQPGLEPPQS…MSVGTKQATA (1224 aa)). Peptidase M2 domains are found at residues 28–610 (DPTE…LGWP) and 629–1208 (IVDE…LGWP). N-linked (GlcNAc...) asparagine glycans are attached at residues N42, N62, N80, N99, and N148. An intrachain disulfide couples C145 to C151. Position 217 (Y217) interacts with chloride. N304 carries N-linked (GlcNAc...) asparagine glycosylation. The cysteines at positions 345 and 363 are disulfide-linked. H376 provides a ligand contact to Zn(2+). E377 functions as the Proton acceptor 1 in the catalytic mechanism. Zn(2+) is bound by residues H380 and E404. N495 carries an N-linked (GlcNAc...) asparagine glycan. H506 functions as the Proton donor 1 in the catalytic mechanism. R515 contacts chloride. C531 and C543 are oxidised to a cystine. N-linked (GlcNAc...) asparagine glycans are attached at residues N535, N573, N601, N643, N663, and N746. A disulfide bond links C743 and C749. Chloride is bound by residues R777 and Y815. An intrachain disulfide couples C943 to C961. A Zn(2+)-binding site is contributed by H974. Catalysis depends on E975, which acts as the Proton acceptor 2. Zn(2+)-binding residues include H978 and E1002. Positions 1076 and 1080 each coordinate chloride. H1104 serves as the catalytic Proton donor 2. Residue R1113 coordinates chloride. Cysteines 1129 and 1141 form a disulfide. Residue N1177 is glycosylated (N-linked (GlcNAc...) asparagine). The juxtamembrane stalk stretch occupies residues 1201–1240 (NGEVLGWPEYSWTPYAVTEFHAATDTADFLGMSVGTKQAT). A helical transmembrane segment spans residues 1242–1262 (GAWVLLALALVFLITSIFLGV). Residues 1263–1281 (KLFSSRRKAFKSSSEMELK) lie on the Cytoplasmic side of the membrane.

It belongs to the peptidase M2 family. Requires Zn(2+) as cofactor. Chloride serves as cofactor.

The protein resides in the cell membrane. The protein localises to the cytoplasm. It carries out the reaction Release of a C-terminal dipeptide, oligopeptide-|-Xaa-Yaa, when Xaa is not Pro, and Yaa is neither Asp nor Glu. Thus, conversion of angiotensin I to angiotensin II, with increase in vasoconstrictor activity, but no action on angiotensin II.. It catalyses the reaction angiotensin I + H2O = L-histidyl-L-leucine + angiotensin II. The enzyme catalyses bradykinin + H2O = L-Phe-L-Arg + bradykinin(1-7). The catalysed reaction is substance P + H2O = substance P(1-9) + L-Leu-L-Met-NH2. It carries out the reaction substance P + H2O = substance P(1-8) + Gly-L-Leu-L-Met-NH2. It catalyses the reaction substance P + H2O = L-Phe-L-Phe-Gly-L-Leu-L-Met-NH2 + substance P(1-6). The enzyme catalyses neurotensin + H2O = neurotensin(1-11) + L-isoleucyl-L-leucine. The catalysed reaction is goralatide + H2O = N-acetyl-L-seryl-L-aspartate + L-lysyl-L-proline. It carries out the reaction Met-enkephalin + H2O = L-phenylalanyl-L-methionine + L-tyrosylglycylglycine. It catalyses the reaction Leu-enkephalin + H2O = L-tyrosylglycylglycine + L-phenylalanyl-L-leucine. The enzyme catalyses Met-enkephalin-Arg-Phe + H2O = L-arginyl-L-phenylalanine + Met-enkephalin. Dipeptidyl carboxypeptidase that removes dipeptides from the C-terminus of a variety of circulating hormones, such as angiotensin I, bradykinin or enkephalins, thereby playing a key role in the regulation of blood pressure, electrolyte homeostasis or synaptic plasticity. Composed of two similar catalytic domains, each possessing a functional active site, with different selectivity for substrates. Plays a major role in the angiotensin-renin system that regulates blood pressure and sodium retention by the kidney by converting angiotensin I to angiotensin II, resulting in an increase of the vasoconstrictor activity of angiotensin. Also able to inactivate bradykinin, a potent vasodilator, and therefore enhance the blood pressure response. Acts as a regulator of synaptic transmission by mediating cleavage of neuropeptide hormones, such as substance P, neurotensin or enkephalins. Catalyzes degradation of different enkephalin neuropeptides (Met-enkephalin, Leu-enkephalin, Met-enkephalin-Arg-Phe and possibly Met-enkephalin-Arg-Gly-Leu). Also acts as a regulator of hematopoietic stem cell differentiation by mediating degradation of hemoregulatory peptide N-acetyl-SDKP (AcSDKP). This is Angiotensin-converting enzyme from Gallus gallus (Chicken).